A 242-amino-acid chain; its full sequence is N-glycosylase/DNA lyase (242 aa).

Residues Gln25, Ser52, and Trp63 each contribute to the 8-oxoguanine site. The interval Lys119–Arg183 is helix-hairpin-helix. The Schiff-base intermediate with DNA role is filled by Lys143. 2 residues coordinate 8-oxoguanine: Phe147 and Pro173. Asp175 is an active-site residue. Positions 209 and 213 each coordinate 8-oxoguanine.

It belongs to the archaeal N-glycosylase/DNA lyase (AGOG) family.

It catalyses the reaction 2'-deoxyribonucleotide-(2'-deoxyribose 5'-phosphate)-2'-deoxyribonucleotide-DNA = a 3'-end 2'-deoxyribonucleotide-(2,3-dehydro-2,3-deoxyribose 5'-phosphate)-DNA + a 5'-end 5'-phospho-2'-deoxyribonucleoside-DNA + H(+). In terms of biological role, DNA repair enzyme that is part of the base excision repair (BER) pathway; protects from oxidative damage by removing the major product of DNA oxidation, 8-oxoguanine (GO), from single- and double-stranded DNA substrates. The polypeptide is N-glycosylase/DNA lyase (Methanopyrus kandleri (strain AV19 / DSM 6324 / JCM 9639 / NBRC 100938)).